The chain runs to 107 residues: Pro-corazonin (107 aa).

Residues 1–21 (MVNSQILILFILSLTITIVMC) form the signal peptide. Q22 bears the Pyrrolidone carboxylic acid mark. An Asparagine amide modification is found at N32. A propeptide spanning residues 88–107 (SFSENMINDHRQPAPTNNNY) is cleaved from the precursor.

The protein belongs to the corazonin family. As to expression, in the adult brain, expressed in four neurons of the lateral protocerebrum project axons towards the retrocerebral complex.

The protein resides in the secreted. Functionally, cardioactive peptide. Corazonin is probably involved in the physiological regulation of the heart beat. This is Pro-corazonin from Apis mellifera (Honeybee).